A 222-amino-acid polypeptide reads, in one-letter code: Cysteine protease inhibitor 9 (222 aa).

Positions 1–26 (MKSINILSFLLLSSTLSLVAFARSFS) are cleaved as a signal peptide. Positions 27-42 (SENPIVLPSTCHDDDN) are excised as a propeptide. Positions 29-34 (NPIVLP) match the Vacuolar targeting signal motif. 2 disulfides stabilise this stretch: cysteine 84–cysteine 136 and cysteine 185–cysteine 191.

It belongs to the protease inhibitor I3 (leguminous Kunitz-type inhibitor) family. Tuber.

The protein localises to the vacuole. Putative inhibitor of cysteine proteases. Does not inhibit papain. May protect the plant by inhibiting proteases of invading organisms. In Solanum tuberosum (Potato), this protein is Cysteine protease inhibitor 9.